A 76-amino-acid polypeptide reads, in one-letter code: Cytochrome c oxidase subunit 6C-1 (76 aa).

Over 4-14 (GALLPKPQMHD) the chain is Mitochondrial matrix. Residues 15-55 (PLSKRLWVHIVGAFIVDLGVAAAHKFGAAKPRKKAYADFYR) traverse the membrane as a helical segment. Residues 56-76 (NHDPMKDFDEMRKAGVFRSVK) are Mitochondrial intermembrane-facing.

It belongs to the cytochrome c oxidase subunit 6c family. Component of the cytochrome c oxidase (complex IV, CIV), a multisubunit enzyme composed of 14 subunits. The complex is composed of a catalytic core of 3 subunits MT-CO1, MT-CO2 and MT-CO3, encoded in the mitochondrial DNA, and 11 supernumerary subunits COX4I, COX5A, COX5B, COX6A, COX6B, COX6C, COX7A, COX7B, COX7C, COX8 and NDUFA4, which are encoded in the nuclear genome. The complex exists as a monomer or a dimer and forms supercomplexes (SCs) in the inner mitochondrial membrane with NADH-ubiquinone oxidoreductase (complex I, CI) and ubiquinol-cytochrome c oxidoreductase (cytochrome b-c1 complex, complex III, CIII), resulting in different assemblies (supercomplex SCI(1)III(2)IV(1) and megacomplex MCI(2)III(2)IV(2)).

It is found in the mitochondrion inner membrane. The protein operates within energy metabolism; oxidative phosphorylation. Component of the cytochrome c oxidase, the last enzyme in the mitochondrial electron transport chain which drives oxidative phosphorylation. The respiratory chain contains 3 multisubunit complexes succinate dehydrogenase (complex II, CII), ubiquinol-cytochrome c oxidoreductase (cytochrome b-c1 complex, complex III, CIII) and cytochrome c oxidase (complex IV, CIV), that cooperate to transfer electrons derived from NADH and succinate to molecular oxygen, creating an electrochemical gradient over the inner membrane that drives transmembrane transport and the ATP synthase. Cytochrome c oxidase is the component of the respiratory chain that catalyzes the reduction of oxygen to water. Electrons originating from reduced cytochrome c in the intermembrane space (IMS) are transferred via the dinuclear copper A center (CU(A)) of subunit 2 and heme A of subunit 1 to the active site in subunit 1, a binuclear center (BNC) formed by heme A3 and copper B (CU(B)). The BNC reduces molecular oxygen to 2 water molecules using 4 electrons from cytochrome c in the IMS and 4 protons from the mitochondrial matrix. This is Cytochrome c oxidase subunit 6C-1 (Cox6c1) from Rattus norvegicus (Rat).